The chain runs to 93 residues: MANNASAEKRILINERNRLQNRFYKSSVRTLTKLYLKDLEVYKISRNPSDKEKAKNRLSLVYSLIDKGSKRNVFHKNTAARKKSKLASQLKIA.

Belongs to the bacterial ribosomal protein bS20 family.

The protein localises to the plastid. It localises to the chloroplast. Functionally, binds directly to 16S ribosomal RNA. This Trieres chinensis (Marine centric diatom) protein is Small ribosomal subunit protein bS20c.